The primary structure comprises 210 residues: Neuroendocrine protein 7B2 (210 aa).

The signal sequence occupies residues 1 to 24 (MTSRMAILSGLLFWLLLEWNPAFA). Cysteine 118 and cysteine 128 are disulfide-bonded. Residues serine 139 and serine 203 each carry the phosphoserine modification.

The protein belongs to the 7B2 family. In terms of assembly, interacts with PCSK2/PC2 early in the secretory pathway. Dissociation occurs at later stages. Post-translationally, proteolytically cleaved in the Golgi by a furin-like convertase to generate bioactive peptides. Sulfated on tyrosine residues.

The protein resides in the secreted. Its function is as follows. Acts as a molecular chaperone for PCSK2/PC2, preventing its premature activation in the regulated secretory pathway. Binds to inactive PCSK2 in the endoplasmic reticulum and facilitates its transport from there to later compartments of the secretory pathway where it is proteolytically matured and activated. Also required for cleavage of PCSK2 but does not appear to be involved in its folding. Plays a role in regulating pituitary hormone secretion. The C-terminal peptide inhibits PCSK2 in vitro. This Rattus norvegicus (Rat) protein is Neuroendocrine protein 7B2 (Scg5).